Here is a 55-residue protein sequence, read N- to C-terminus: MKKLTDKQKSRFWEQRRNVNFQQSRRLEGIEIPLVTLTADEALVRLDELRRHYER.

This is an uncharacterized protein from Salmonella typhimurium (strain LT2 / SGSC1412 / ATCC 700720).